Reading from the N-terminus, the 1141-residue chain is LRR receptor-like serine/threonine-protein kinase RGI1 (1141 aa).

A signal peptide spans 1-33 (MSLHSLIFFSSSSSSLLFSFFFIFIFCFSLSDA). The Extracellular portion of the chain corresponds to 34-726 (EQNPEASILY…DASRTRKLRL (693 aa)). Cysteine 69 and cysteine 77 form a disulfide bridge. Residue asparagine 71 is glycosylated (N-linked (GlcNAc...) asparagine). LRR repeat units follow at residues 80–104 (QGFI…LPAF), 105–128 (RSLQ…LGDC), 130–152 (GLKV…LSKL), 153–176 (RNLE…ISKC), 178–200 (KLKS…LGKL), 202–225 (GLEV…IGDC), 226–249 (SNLT…LGKL), 250–273 (KKLE…LGNC), 275–297 (ELVD…IGQL), 298–321 (TKLE…IGNC), 322–345 (SNLK…IGRL), 347–369 (FLEE…ISNC), 370–392 (SSLV…ELGT), 394–417 (TKLT…LADC), 418–441 (TDLQ…LFML), 443–464 (NLTK…EIGN), 465–489 (CSSL…IGSL), 490–513 (KKIN…IGSC), 514–537 (SELQ…VSSL), 538–561 (SGLQ…LGRL), 563–585 (SLNK…LGMC), 586–609 (SGLQ…LGDI), 610–634 (ENLE…IASL), 636–657 (KLSI…LANI), and 658–682 (ENLV…LFRQ). Residue asparagine 116 is glycosylated (N-linked (GlcNAc...) asparagine). 2 consecutive short sequence motifs (small peptide recognition) follow at residues 185-186 (FD) and 207-210 (RIGG). Residue asparagine 227 is glycosylated (N-linked (GlcNAc...) asparagine). 2 short sequence motifs (small peptide recognition) span residues 230 to 235 (VLGLAE) and tyrosine 258. Asparagine 272 carries N-linked (GlcNAc...) asparagine glycosylation. A Small peptide recognition motif is present at residues 280–282 (FLY). Residue asparagine 320 is glycosylated (N-linked (GlcNAc...) asparagine). Short sequence motifs (small peptide recognition) lie at residues 328–331 (DLSL) and 350–352 (EFM). The N-linked (GlcNAc...) asparagine glycan is linked to asparagine 368. Short sequence motifs (small peptide recognition) lie at residues 398 to 402 (LFFAW) and 424 to 427 (DLSR). Asparagine 443 carries N-linked (GlcNAc...) asparagine glycosylation. A Small peptide recognition motif is present at residues 446–450 (KLLLI). Residue asparagine 464 is glycosylated (N-linked (GlcNAc...) asparagine). The Small peptide recognition motif lies at 470 to 472 (RLR). An N-linked (GlcNAc...) asparagine glycan is attached at asparagine 523. Asparagine 617 is a glycosylation site (N-linked (GlcNAc...) asparagine). N-linked (GlcNAc...) asparagine glycosylation occurs at asparagine 664. The chain crosses the membrane as a helical span at residues 727–747 (TLALLITLTVVLMILGAVAVI). Topologically, residues 748–1141 (RARRNIDNER…LLYSSSSSIE (394 aa)) are cytoplasmic. The 289-residue stretch at 786-1074 (LVEPNVIGKG…EIKQEREEYA (289 aa)) folds into the Protein kinase domain. ATP-binding positions include 792–800 (IGKGCSGVV) and lysine 814. 2 positions are modified to phosphotyrosine: tyrosine 868 and tyrosine 906. Aspartate 919 (proton acceptor) is an active-site residue. 2 positions are modified to phosphotyrosine: tyrosine 962 and tyrosine 969.

Belongs to the protein kinase superfamily. Ser/Thr protein kinase family. As to quaternary structure, interacts with beet curly top virus AL4/C4. Binds to RGF peptides such as RGF1, GLV5/CLEL1/RGF2, GLV7/CLEL3/RGF3, GLV3/RGF4, GLV10/CLEL7/RGF5 and RGF10/CLELN; these interactions trigger the formation of heterodimers with SERK1, SERK2 or BAK1/SERK3 via LRR regions. Interacts with UBP13. In terms of processing, phosphorylated and ubiquitinated upon interaction with RGF1, thus leading to activation a subsequent degradation. Stabilized by UBP12 and UBP13-mediated deubiquitination. Autophosphorylated. As to expression, expressed in roots.

It is found in the cell membrane. The catalysed reaction is L-seryl-[protein] + ATP = O-phospho-L-seryl-[protein] + ADP + H(+). It carries out the reaction L-threonyl-[protein] + ATP = O-phospho-L-threonyl-[protein] + ADP + H(+). In terms of biological role, together with RGI2, RGI3, RGI4 and RGI5, acts as a receptor of RGF peptides (e.g. RGF1, GLV5/CLEL1/RGF2, GLV7/CLEL3/RGF3, GLV3/RGF4, GLV10/CLEL7/RGF5 and RGF10/CLELN), peptide hormones which maintain the postembryonic root stem cell niche by regulating the expression levels and patterns of the transcription factor PLETHORA (PLT, e.g. PLT1 and PLT2). Links RGF peptides signal with their downstream components. This Arabidopsis thaliana (Mouse-ear cress) protein is LRR receptor-like serine/threonine-protein kinase RGI1.